The chain runs to 189 residues: Interferon alpha-21 (189 aa).

A signal peptide spans 1 to 23 (MALSFSLLMAVLVLSYKSICSLG). 2 disulfide bridges follow: C24-C122 and C52-C162.

It belongs to the alpha/beta interferon family.

The protein resides in the secreted. Produced by macrophages, IFN-alpha have antiviral activities. Interferon stimulates the production of two enzymes: a protein kinase and an oligoadenylate synthetase. This chain is Interferon alpha-21 (IFNA21), found in Homo sapiens (Human).